We begin with the raw amino-acid sequence, 198 residues long: Recombination protein RecR (198 aa).

The C4-type zinc finger occupies 57–72 (CSICGNLTDDDPCHIC). One can recognise a Toprim domain in the interval 80 to 175 (TTILVVEDAK…KVTRLARGLA (96 aa)).

Belongs to the RecR family.

Functionally, may play a role in DNA repair. It seems to be involved in an RecBC-independent recombinational process of DNA repair. It may act with RecF and RecO. The chain is Recombination protein RecR from Streptococcus pyogenes serotype M5 (strain Manfredo).